We begin with the raw amino-acid sequence, 208 residues long: UPF0323 lipoprotein HH_0014 (208 aa).

Positions 1–26 are cleaved as a signal peptide; sequence MKHIHKIKNYAMVGGLGVMAVFALNA. C27 is lipidated: N-palmitoyl cysteine. C27 is lipidated: S-diacylglycerol cysteine. Residues 148–208 are disordered; it reads ANSQRNYKSP…TNRNTGSMGS (61 aa). Composition is skewed to low complexity over residues 169–185 and 193–208; these read SAKT…SGKS and SSQS…SMGS.

It belongs to the UPF0323 family.

Its subcellular location is the cell membrane. This is UPF0323 lipoprotein HH_0014 from Helicobacter hepaticus (strain ATCC 51449 / 3B1).